Reading from the N-terminus, the 729-residue chain is Fatty acid oxidation complex subunit alpha (729 aa).

Residues 1-189 are enoyl-CoA hydratase/isomerase; sequence MLYQGETLQL…KVGLVDAVVA (189 aa). D296 contacts substrate. Residues 311–729 form a 3-hydroxyacyl-CoA dehydrogenase region; that stretch reads EAPKQAAVLG…LSDVSTGQPA (419 aa). Residues M324, D343, 400–402, K407, and S429 each bind NAD(+); that span reads VVE. H450 serves as the catalytic For 3-hydroxyacyl-CoA dehydrogenase activity. N453 lines the NAD(+) pocket. Substrate is bound by residues N500 and Y660.

The protein in the N-terminal section; belongs to the enoyl-CoA hydratase/isomerase family. In the C-terminal section; belongs to the 3-hydroxyacyl-CoA dehydrogenase family. In terms of assembly, heterotetramer of two alpha chains (FadB) and two beta chains (FadA).

It catalyses the reaction a (3S)-3-hydroxyacyl-CoA + NAD(+) = a 3-oxoacyl-CoA + NADH + H(+). It carries out the reaction a (3S)-3-hydroxyacyl-CoA = a (2E)-enoyl-CoA + H2O. The catalysed reaction is a 4-saturated-(3S)-3-hydroxyacyl-CoA = a (3E)-enoyl-CoA + H2O. The enzyme catalyses (3S)-3-hydroxybutanoyl-CoA = (3R)-3-hydroxybutanoyl-CoA. It catalyses the reaction a (3Z)-enoyl-CoA = a 4-saturated (2E)-enoyl-CoA. It carries out the reaction a (3E)-enoyl-CoA = a 4-saturated (2E)-enoyl-CoA. Its pathway is lipid metabolism; fatty acid beta-oxidation. Involved in the aerobic and anaerobic degradation of long-chain fatty acids via beta-oxidation cycle. Catalyzes the formation of 3-oxoacyl-CoA from enoyl-CoA via L-3-hydroxyacyl-CoA. It can also use D-3-hydroxyacyl-CoA and cis-3-enoyl-CoA as substrate. The polypeptide is Fatty acid oxidation complex subunit alpha (Serratia proteamaculans (strain 568)).